Consider the following 21-residue polypeptide: Ocellatin-4 (21 aa).

Position 21 is an isoleucine amide (isoleucine 21).

As to expression, expressed by the skin dorsal glands.

Its subcellular location is the secreted. Has hemolytic activity against human erythrocytes (HC50=14.3 uM). Has antibacterial activity against the Gram-positive bacterium S.aureus ATCC 25923 (MIC=64 uM) and the Gram-negative bacterium E.coli ATCC 25922 (MIC=64 uM). The chain is Ocellatin-4 from Leptodactylus ocellatus (Argus frog).